The primary structure comprises 1333 residues: DNA-directed RNA polymerase subunit beta' (1333 aa).

The Zn(2+) site is built by Cys60, Cys62, Cys75, and Cys78. Positions 535, 537, and 539 each coordinate Mg(2+). Positions 901, 983, 990, and 993 each coordinate Zn(2+).

It belongs to the RNA polymerase beta' chain family. As to quaternary structure, the RNAP catalytic core consists of 2 alpha, 1 beta, 1 beta' and 1 omega subunit. When a sigma factor is associated with the core the holoenzyme is formed, which can initiate transcription. Requires Mg(2+) as cofactor. The cofactor is Zn(2+).

The catalysed reaction is RNA(n) + a ribonucleoside 5'-triphosphate = RNA(n+1) + diphosphate. Its function is as follows. DNA-dependent RNA polymerase catalyzes the transcription of DNA into RNA using the four ribonucleoside triphosphates as substrates. The sequence is that of DNA-directed RNA polymerase subunit beta' from Corynebacterium efficiens (strain DSM 44549 / YS-314 / AJ 12310 / JCM 11189 / NBRC 100395).